We begin with the raw amino-acid sequence, 241 residues long: MINLNTNDNLTNAYEIARYIKEAKKSTPVKAYVQGKIQVEEEEGLKIFGSEDFKILIGELEVVEKVIEQNKDRIKYYHLEYDRRNSAIPLLDITHLDARIEPGAIIRDKVKIGKNAVIMMGAVINIGAEIGENSMIDMNAVIGARGIIGKNVHVGAGAVIAGVLEPPSSVPVVIEDNVMIGANAVILEGVRVGRGAVVAAGSVVIEDVPPNTVVAGVPAKIVKVVDEKTREKTKLMEDLRG.

Belongs to the transferase hexapeptide repeat family. DapH subfamily.

It carries out the reaction (S)-2,3,4,5-tetrahydrodipicolinate + acetyl-CoA + H2O = L-2-acetamido-6-oxoheptanedioate + CoA. It participates in amino-acid biosynthesis; L-lysine biosynthesis via DAP pathway; LL-2,6-diaminopimelate from (S)-tetrahydrodipicolinate (acetylase route): step 1/3. In terms of biological role, catalyzes the transfer of an acetyl group from acetyl-CoA to tetrahydrodipicolinate. In Caldanaerobacter subterraneus subsp. tengcongensis (strain DSM 15242 / JCM 11007 / NBRC 100824 / MB4) (Thermoanaerobacter tengcongensis), this protein is 2,3,4,5-tetrahydropyridine-2,6-dicarboxylate N-acetyltransferase.